The sequence spans 988 residues: Transcriptional regulator of yeast form adherence 5 (988 aa).

2 consecutive C2H2-type zinc fingers follow at residues 7 to 29 and 35 to 59; these read YICA…ERSH and FHCL…TVHH. Over residues 59–83 the composition is skewed to polar residues; sequence HTNLNPSTLPSNKSLKNPTTNPLDL. Disordered regions lie at residues 59 to 129 and 174 to 229; these read HTNL…SSVG and SMES…SNNN. Residues 84–106 show a composition bias toward low complexity; it reads SNNEGTTTTTKTGNRKNNSNKNG. 2 stretches are compositionally biased toward polar residues: residues 113–129 and 174–208; these read TNPN…SSVG and SMES…EIVL.

The protein resides in the nucleus. Functionally, transcription factor required for yeast cell adherence to silicone substrate. The sequence is that of Transcriptional regulator of yeast form adherence 5 (TRY5) from Candida albicans (strain SC5314 / ATCC MYA-2876) (Yeast).